Here is a 246-residue protein sequence, read N- to C-terminus: Transcription factor A, mitochondrial (246 aa).

Residues 1–42 constitute a mitochondrion transit peptide; that stretch reads MALLRGVWGVLSALGKSGADLCAVCGSRLRSPFSFAYVPRWF. The HMG box 1 DNA-binding region spans 50–118; it reads PKKPMTSYVR…VYKEEVNRIQ (69 aa). A phosphoserine; by PKA mark is found at Ser56 and Ser61. Thr122 is subject to Phosphothreonine. The HMG box 2 DNA-binding region spans 155-219; that stretch reads PKRPRSAYNI…RYYNEMKSWE (65 aa). Position 160 is a phosphoserine; by PKA (Ser160). Phosphoserine is present on residues Ser193 and Ser195.

Monomer; binds DNA as a monomer. Homodimer. Component of the mitochondrial transcription initiation complex, composed at least of TFB2M, TFAM and POLRMT. In this complex TFAM recruits POLRMT to the promoter whereas TFB2M induces structural changes in POLRMT to enable promoter opening and trapping of the DNA non-template strand. Upon metabolic stress, forms a complex composed of FOXO3, SIRT3, TFAM and POLRMT. Interacts with TFB1M and TFB2M. Interacts with CLPX; this enhances DNA-binding. In terms of processing, phosphorylation by PKA within the HMG box 1 impairs DNA binding and promotes degradation by the AAA+ Lon protease.

It is found in the mitochondrion. The protein localises to the mitochondrion matrix. The protein resides in the mitochondrion nucleoid. In terms of biological role, binds to the mitochondrial light strand promoter and functions in mitochondrial transcription regulation. Component of the mitochondrial transcription initiation complex, composed at least of TFB2M, TFAM and POLRMT that is required for basal transcription of mitochondrial DNA. In this complex, TFAM recruits POLRMT to a specific promoter whereas TFB2M induces structural changes in POLRMT to enable promoter opening and trapping of the DNA non-template strand. Required for accurate and efficient promoter recognition by the mitochondrial RNA polymerase. Promotes transcription initiation from the HSP1 and the light strand promoter by binding immediately upstream of transcriptional start sites. Is able to unwind DNA. Bends the mitochondrial light strand promoter DNA into a U-turn shape via its HMG boxes. Required for maintenance of normal levels of mitochondrial DNA. May play a role in organizing and compacting mitochondrial DNA. The protein is Transcription factor A, mitochondrial of Sus scrofa (Pig).